The chain runs to 363 residues: D(1) dopamine receptor (363 aa).

Residues 1–24 are Extracellular-facing; the sequence is MAVLDLNLTTVIDSGFMESDRSVR. An N-linked (GlcNAc...) asparagine glycan is attached at Asn7. Residues 25–45 form a helical membrane-spanning segment; that stretch reads VLTGCFLSVLILSTLLGNTLV. Over 46–61 the chain is Cytoplasmic; sequence CAAVTKFRHLRSKVTN. The helical transmembrane segment at 62–81 threads the bilayer; sequence FFVISLAVSDLLVAVLVMPW. Residues 82 to 98 lie on the Extracellular side of the membrane; that stretch reads KAVTEVAGFWPFGAFCD. Residues Cys97 and Cys187 are joined by a disulfide bond. A helical transmembrane segment spans residues 99 to 120; that stretch reads IWVAFDIMCSTASILNLCVISV. At 121–139 the chain is on the cytoplasmic side; that stretch reads DRYWAISSPFRYERKMTPR. The chain crosses the membrane as a helical span at residues 140–164; it reads VAFVMISGAWTLSVLISFIPVQLKW. The Extracellular portion of the chain corresponds to 165–194; that stretch reads HKAQPIGFLEVNASRRDLPTDNCDSSLNRT. A helical transmembrane segment spans residues 195 to 219; the sequence is YAISSSLISFYIPVAIMIVTYTQIY. Topologically, residues 220–271 are cytoplasmic; it reads RIAQKQIRRISALERAAESAQIRHDSMGSGSNMDLESSFKLSFKRETKVLKT. Residues 272 to 297 form a helical membrane-spanning segment; sequence LSVIMGVFVCCWLPFFILNCMVPFCK. Residues 298–310 lie on the Extracellular side of the membrane; sequence RTSNGLPCISPTT. A helical membrane pass occupies residues 311 to 330; sequence FDVFVWFGWANSSLNPIIYA. Residues 331–363 lie on the Cytoplasmic side of the membrane; the sequence is FNADFRRAFAILLGCQRLCPGSISMETPSLNKN. A lipid anchor (S-palmitoyl cysteine) is attached at Cys345.

It belongs to the G-protein coupled receptor 1 family. As to expression, retina.

The protein localises to the cell membrane. It localises to the cell projection. The protein resides in the cilium membrane. Its function is as follows. Dopamine receptor whose activity is mediated by G proteins which activate adenylyl cyclase. Could be involved in growth hormone release. The protein is D(1) dopamine receptor of Carassius auratus (Goldfish).